The primary structure comprises 870 residues: NEDD4-like E3 ubiquitin-protein ligase WWP2 (870 aa).

The C2 domain maps to 1 to 117 (MASASSSRAG…KNNGGKMENM (117 aa)). A disordered region spans residues 151 to 299 (VPNGSALTDG…QQLPAAAQAP (149 aa)). Composition is skewed to polar residues over residues 152 to 171 (PNGS…SSGT) and 200 to 210 (SARTTPATGEQ). Phosphoserine is present on serine 211. Polar residues-rich tracts occupy residues 222–243 (VKNS…TTAT) and 263–272 (VTPNPNTTSL). Low complexity predominate over residues 290–299 (QQLPAAAQAP). 4 WW domains span residues 300 to 333 (DALP…RPLP), 330 to 363 (RPLP…RPTA), 405 to 437 (GPLP…DPRT), and 444 to 477 (PALP…DPRP). The 335-residue stretch at 536 to 870 (KPYDLRRRLY…IEETEGFGQE (335 aa)) folds into the HECT domain. Cysteine 838 serves as the catalytic Glycyl thioester intermediate.

In terms of assembly, interacts with POU5F1, RBP1, EGR2 and SLC11A2. Interacts with SCNN1A, SCNN1B, SCNN1G, WBP1, WBP2 and ATN1. Interacts with ERBB4, NDFIP1 and NDFIP2. Interacts with ARRDC4. Interacts (via WW domains) with ARRDC1 (via PPxY motifs); ubiquitinates ARRDC1. Interacts (via WW domains) with ARRDC2 and ARRDC3. (Microbial infection) Interacts with adenovirus type 2 PIII. Autoubiquitinated. Ubiquitinated by the SCF(FBXL15) complex, leading to its degradation by the proteasome. In terms of tissue distribution, detected in heart, throughout the brain, placenta, lung, liver, muscle, kidney and pancreas. Also detected in spleen and peripheral blood leukocytes.

The protein localises to the nucleus. The catalysed reaction is S-ubiquitinyl-[E2 ubiquitin-conjugating enzyme]-L-cysteine + [acceptor protein]-L-lysine = [E2 ubiquitin-conjugating enzyme]-L-cysteine + N(6)-ubiquitinyl-[acceptor protein]-L-lysine.. Its pathway is protein modification; protein ubiquitination. Its activity is regulated as follows. Activated by NDFIP1- and NDFIP2-binding. Its function is as follows. E3 ubiquitin-protein ligase which accepts ubiquitin from an E2 ubiquitin-conjugating enzyme in the form of a thioester and then directly transfers the ubiquitin to targeted substrates. Polyubiquitinates POU5F1 by 'Lys-63'-linked conjugation and promotes it to proteasomal degradation; in embryonic stem cells (ESCs) the ubiquitination is proposed to regulate POU5F1 protein level. Ubiquitinates EGR2 and promotes it to proteasomal degradation; in T-cells the ubiquitination inhibits activation-induced cell death. Ubiquitinates SLC11A2; the ubiquitination is enhanced by presence of NDFIP1 and NDFIP2. Ubiquitinates RPB1 and promotes it to proteasomal degradation. The chain is NEDD4-like E3 ubiquitin-protein ligase WWP2 (WWP2) from Homo sapiens (Human).